Consider the following 662-residue polypeptide: p-hydroxybenzoic acid efflux pump subunit AaeB (662 aa).

11 helical membrane passes run 22-42 (FAFK…HLQL), 52-72 (AAIV…SGAI), 76-96 (GMLR…IIIA), 102-122 (VVML…SSLV), 129-149 (IFGL…GTPL), 161-181 (EIVL…PRSI), 378-398 (LFWL…IAVV), 415-435 (FLFG…FIMP), 439-459 (QSML…GLEV), 465-485 (GSLG…PMTF), and 491-511 (LDSA…IMLI).

It belongs to the aromatic acid exporter ArAE (TC 2.A.85) family.

The protein resides in the cell inner membrane. Its function is as follows. Forms an efflux pump with AaeA. Could function as a metabolic relief valve, allowing to eliminate certain compounds when they accumulate to high levels in the cell. This chain is p-hydroxybenzoic acid efflux pump subunit AaeB, found in Pectobacterium atrosepticum (strain SCRI 1043 / ATCC BAA-672) (Erwinia carotovora subsp. atroseptica).